The primary structure comprises 88 residues: Alpha-latrotoxin-associated low molecular weight protein-2 (88 aa).

A signal peptide spans 1-19 (MLKLICIAFLVTVLTLVAG). Gln-20 carries the pyrrolidone carboxylic acid modification. 3 cysteine pairs are disulfide-bonded: Cys-30–Cys-66, Cys-46–Cys-62, and Cys-49–Cys-75.

The protein belongs to the arthropod CHH/MIH/GIH/VIH hormone family. The N-terminus is blocked. Expressed by the venom gland.

The protein resides in the secreted. May increase the toxicity of alpha-latrotoxin and/or other venom components. Is non-toxic to mice and to the cockroach Periplaneta americana. This chain is Alpha-latrotoxin-associated low molecular weight protein-2, found in Latrodectus tredecimguttatus (Mediterranean black widow spider).